The primary structure comprises 480 residues: MKNGMLALGMTAADVPDNFLWGAASAAYQVEGATNKDGKGRSVWDYYLDEKHLAGPGISGALRLTFTDRDQYLKDIQLFKELGLNSYRFSHRLDTYYPDGQGPVNLRAVAHYRQFITDLEAAGIKPLVTLYHWDMPESLSAAGGWENRESVEWFQRYAEVIFANFSDQVDQFVLINEPTVEVATKIMAEKRLKGEELTLPPIVPAGSYLETSLKSYNHILLASAAAAESFKVKGYKGRLGIALPFFPVLTTENASDEDKADARLVDGILNRWFLDAMYKGNYPADVLKLAADRHLNIDVQPGDAERIHDAGLGFLGINYYAPFFIRHQKNASEVYSPEIIFPKNEKLAFNGAVRPDQFSALLERVRDEYGNPPVIITENGAGFEGEDQLTNGKVNDVNRCLYLVDHIHAMRESIARGANVQGYYVWSSHDNLEWLSGYKSRFGMIYVDYDTQKRTPKLSAEIYGKIIRGENISDVDCKSD.

Catalysis depends on glutamate 177, which acts as the Proton donor. Glutamate 378 functions as the Nucleophile in the catalytic mechanism.

This sequence belongs to the glycosyl hydrolase 1 family.

The catalysed reaction is Hydrolysis of terminal, non-reducing beta-D-glucosyl residues with release of beta-D-glucose.. This chain is Beta-glucosidase A (bglA), found in Enterobacter agglomerans (Erwinia herbicola).